The sequence spans 359 residues: Opine dehydrogenase (359 aa).

It belongs to the lysopine/nopaline/octopine/opine/vitopine dehydrogenases family. As to quaternary structure, homodimer.

The enzyme catalyses (2S)-2-[(R)-1-carboxyethylamino]pentanoate + NAD(+) + H2O = L-2-aminopentanoate + pyruvate + NADH + H(+). In terms of biological role, in the forward direction also acts on secondary amine dicarboxylates such as N-(1-carboxyethyl)methionine and N-(1-carboxyethyl)phenylalanine. In the reverse direction, the enzyme also acts on neutral amino acids as an amino donor. They include L-amino acids such as 2-aminopentanoic acid, 2-aminobutyric acid, 2-aminohexanoic acid, 3-chloroalanine, O-acetylserine, methionine, isoleucine, valine, phenylalanine, leucine and alanine. The polypeptide is Opine dehydrogenase (odh) (Arthrobacter sp. (strain 1C)).